The following is a 310-amino-acid chain: MGRAPCCDKANVKKGPWSPEEDAKLKSYIENSGTGGNWIALPQKIGLKRCGKSCRLRWLNYLRPNIKHGGFSEEEENIICSLYLTIGSRWSIIAAQLPGRTDNDIKNYWNTRLKKKLINKQRKELQEACMEQQEMMVMMKRQHQQQQIQTSFMMRQDQTMFTWPLHHHNVQVPALFMNQTNSFCDQEDVKPVLIKNMVKIEDQELEKTNPHHHQDSMTNAFDHLSFSQLLLDPNHNHLGSGEGFSMNSILSANTNSPLLNTSNDNQWFGNFQAETVNLFSGASTSTSADQSTISWEDISSLVYSDSKQFF.

HTH myb-type domains follow at residues 9–62 (KANV…LNYL) and 63–117 (RPNI…KKKL). 2 consecutive DNA-binding regions (H-T-H motif) follow at residues 38–62 (WIALPQKIGLKRCGKSCRLRWLNYL) and 90–113 (WSIIAAQLPGRTDNDIKNYWNTRL).

Ubiquitous.

It is found in the nucleus. Functionally, transcription activator. Positively regulates axillary meristems (AMs) formation and development, especially during inflorescence. The chain is Transcription factor RAX3 (RAX3) from Arabidopsis thaliana (Mouse-ear cress).